The primary structure comprises 157 residues: Small ribosomal subunit protein bS16 (157 aa).

Residues 114–157 form a disordered region; the sequence is NEGPTAEAITEKKKKAKEEAAAKAAAEAEAAAKAEEAPAEEAAE.

It belongs to the bacterial ribosomal protein bS16 family.

The polypeptide is Small ribosomal subunit protein bS16 (Corynebacterium diphtheriae (strain ATCC 700971 / NCTC 13129 / Biotype gravis)).